Consider the following 427-residue polypeptide: MDAFRLAPCGPLRGRLRVPGDKSVTHRGLMLLALAEGEGRLFYPLKAGDTLSTARVLQALGAEVREEGPHFLVRGRGLRFKEPEDVLDCGNAGTLMRLLLGLLAGQEGLFAVLTGDASLRRRPMGRVVAPLRAMGARVDGREEGERAPLAVRGAPLRGLRYTLPVPSAQVKSALLLAGLFAEGVTEVEEPTPTRDHTERLFRHFGLPLEVEGRRVRTWRTGPFPAKDLVVPGDFSSAAFFLVAALVTPGSEVVVEGVGLNPTRTGLLTVLKAMGADLEWRVLEGEAGEPVGWVRARHSLLKGVAVDPGLIPLMVDEVPVLAAAAAWAEGETYIPGLSELRVKESDRVRAIAENLRALGVEVEEGPDWLRIRGGGVRPGRVRPFHDHRIAMAFAVVGLPVGVEVEEPHWAEISYPGFFQDLLRLCAAS.

Lys22, Ser23, and Arg27 together coordinate 3-phosphoshikimate. Lys22 serves as a coordination point for phosphoenolpyruvate. Residues Gly93 and Arg122 each coordinate phosphoenolpyruvate. 3-phosphoshikimate is bound by residues Ser167, Gln169, Asp315, and Lys342. Residue Gln169 participates in phosphoenolpyruvate binding. The active-site Proton acceptor is Asp315. Phosphoenolpyruvate is bound by residues Arg346 and Arg387.

This sequence belongs to the EPSP synthase family. In terms of assembly, monomer.

Its subcellular location is the cytoplasm. The catalysed reaction is 3-phosphoshikimate + phosphoenolpyruvate = 5-O-(1-carboxyvinyl)-3-phosphoshikimate + phosphate. It functions in the pathway metabolic intermediate biosynthesis; chorismate biosynthesis; chorismate from D-erythrose 4-phosphate and phosphoenolpyruvate: step 6/7. Functionally, catalyzes the transfer of the enolpyruvyl moiety of phosphoenolpyruvate (PEP) to the 5-hydroxyl of shikimate-3-phosphate (S3P) to produce enolpyruvyl shikimate-3-phosphate and inorganic phosphate. The protein is 3-phosphoshikimate 1-carboxyvinyltransferase of Thermus thermophilus (strain ATCC BAA-163 / DSM 7039 / HB27).